Reading from the N-terminus, the 96-residue chain is uncharacterized protein (96 aa).

The segment at 35–96 (SPSGEKRSTK…KKFSSPPHPK (62 aa)) is disordered. Over residues 38-52 (GEKRSTKNQTKENTK) the composition is skewed to basic and acidic residues. The segment covering 69 to 80 (ANQQTNENSKPL) has biased composition (polar residues).

This is an uncharacterized protein from Dictyostelium discoideum (Social amoeba).